Reading from the N-terminus, the 447-residue chain is Tubulin beta-1 chain (447 aa).

A GTP-binding site is contributed by Gln11. Ser40 carries the post-translational modification Phosphoserine. Positions 69, 138, 142, 143, 144, 204, and 226 each coordinate GTP. Glu69 provides a ligand contact to Mg(2+). A Phosphoserine modification is found at Ser339. The tract at residues 427 to 447 is disordered; the sequence is EATADEDAEFEEEQEAEVDEN. The span at 429-447 shows a compositional bias: acidic residues; that stretch reads TADEDAEFEEEQEAEVDEN.

This sequence belongs to the tubulin family. Dimer of alpha and beta chains. A typical microtubule is a hollow water-filled tube with an outer diameter of 25 nm and an inner diameter of 15 nM. Alpha-beta heterodimers associate head-to-tail to form protofilaments running lengthwise along the microtubule wall with the beta-tubulin subunit facing the microtubule plus end conferring a structural polarity. Microtubules usually have 13 protofilaments but different protofilament numbers can be found in some organisms and specialized cells. Interacts with mgr and Vhl. Requires Mg(2+) as cofactor.

It localises to the cytoplasm. Its subcellular location is the cytoskeleton. In terms of biological role, tubulin is the major constituent of microtubules, a cylinder consisting of laterally associated linear protofilaments composed of alpha- and beta-tubulin heterodimers. Microtubules grow by the addition of GTP-tubulin dimers to the microtubule end, where a stabilizing cap forms. Below the cap, tubulin dimers are in GDP-bound state, owing to GTPase activity of alpha-tubulin. The polypeptide is Tubulin beta-1 chain (betaTub56D) (Drosophila melanogaster (Fruit fly)).